The chain runs to 444 residues: Prenyltransferase phnF (444 aa).

The protein belongs to the tryptophan dimethylallyltransferase family.

The catalysed reaction is 2,3,4,7,9-pentahydroxy-6-methyl-1H-phenalen-1-one + dimethylallyl diphosphate = 2,4,7,9-tetrahydroxy-6-methyl-8-(2-methylbut-3-en-2-yl)-1-oxo-1H-phenalen-3-ol + diphosphate. It functions in the pathway secondary metabolite biosynthesis. Prenyltransferase; part of the gene cluster that mediates the biosynthesis of phenalenones such as herqueinone, compounds that have been reported to treat tumors, bacterial infections and/or mycoses, and rheumatic diseases. The non-reducing polyketide synthase phnA synthesizes the heptaketide backbone and cyclizes it into the angular, hemiketal-containing naphtho-gamma-pyrone prephenalenone. The product template (PT) domain of phnA catalyzes only the C4-C9 aldol condensation, which is unprecedented among known PT domains. The transformation of prephenalenone to phenalenones requires an FAD-dependent monooxygenase phnB, which catalyzes the C2 aromatic hydroxylation of prephenalenone and ring opening of the gamma-pyrone ring simultaneously. Subsequent intramolecular deprotonation of C3 phenolic oxygen accelerates phenalenone ring closure to yield the tricyclic phenalenone core with a C2 hydroxylation. The prenyltransferase phnF further catalyzes reverse C-prenylation of phenalenone by direct electrophilic substitution at C6, or possibly via first a forward O-prenylation of a neighboring phenol in phenalenone, followed by a Claisen rearrangement. The hydroalkoxylation enzyme phnH catalyzes the 5-exo-trig cyclization via acid catalysis after the spontaneous deprotonation of 7-OH, which leads to the formation of the dihydrobenzofuran atrovenetin. Atrovenetin is further converted to deoxyherqueinone by the O-methyltransferase phnC which can methylate C2-OH to stabilize the northern portion of the phenalenone core. Finally, the oxidoreductase phnG converts deoxyherqueinone to herqueinone via C6 hydroxylation. This chain is Prenyltransferase phnF, found in Penicillium herquei.